The following is a 370-amino-acid chain: MDLTWVTEGRTTIAVPCQNPDVPFPPGTAPVFYNSRMALNRDSTVLVVRQTHPHSYLDAMAASGIRGCRVGYETGVPVTFNDRDQLAIDLITHNVQSLGIKADITCRDANSLMSDEKFGFVDLDPFGTPAPFIDAAIRSSGKYLGVTATDTAPLCGAHLKAGIRRYMARPLNTEYHTEVGLRILLGNVARHAAVYDKGITPLFCYAHEHFVRLHLQLKSSASAADKSIARLGYIHQCPKCPYRLEEQKFFPGIHTCPLCGASLTPTGPLWTGSTHDPNILAGMIEDAETFIAGDPSGLLKLLALCRDEPDISFSYDYHKLGKFYRLSPGPIDVLLNRLRDKGYRAGRVHYSGYGIKTDAPLEEIRDCISS.

Positions 4–368 (TWVTEGRTTI…APLEEIRDCI (365 aa)) constitute a Trm1 methyltransferase domain. S-adenosyl-L-methionine-binding residues include arginine 41, arginine 66, aspartate 82, aspartate 108, and alanine 109. Residues cysteine 237, cysteine 240, cysteine 256, and cysteine 259 each contribute to the Zn(2+) site.

It belongs to the class I-like SAM-binding methyltransferase superfamily. Trm1 family.

It carries out the reaction guanosine(26) in tRNA + 2 S-adenosyl-L-methionine = N(2)-dimethylguanosine(26) in tRNA + 2 S-adenosyl-L-homocysteine + 2 H(+). In terms of biological role, dimethylates a single guanine residue at position 26 of a number of tRNAs using S-adenosyl-L-methionine as donor of the methyl groups. In Methanospirillum hungatei JF-1 (strain ATCC 27890 / DSM 864 / NBRC 100397 / JF-1), this protein is tRNA (guanine(26)-N(2))-dimethyltransferase.